Reading from the N-terminus, the 970-residue chain is Longitudinals lacking protein, isoforms F/I/K/T (970 aa).

Positions 32 to 97 (VDCTLAAEGK…MYRGEVNISQ (66 aa)) constitute a BTB domain. Disordered stretches follow at residues 115–200 (LSDN…SSVL), 228–340 (SSGP…ASAS), 447–468 (DAQQRDPQASKQDKGEQTEGAQ), and 790–843 (QTVH…LQDD). Composition is skewed to low complexity over residues 162-175 (SGDVSGSREGSSSP), 228-251 (SSGPAAGTSSQASSTQQQQPLTST), 263-293 (TSSTAAPASGASASAAVQQAHLHQQQAQTTS), and 329-340 (NSATGPNPASAS). 2 stretches are compositionally biased toward polar residues: residues 447 to 456 (DAQQRDPQAS) and 808 to 818 (QLQTHHIQTVV). A compositionally biased stretch (low complexity) spans 819-828 (QSSSGQQQHD). The segment at 903–925 (YVCRHCGKKYRWKSTLRRHENVE) adopts a C2H2-type 1; degenerate zinc-finger fold. The C2H2-type 2 zinc-finger motif lies at 933–955 (HPCPYCSYKAKQRGNLGVHVRKH).

By stage 11, isoform F is expressed throughout the mesoderm whereas isoform T, and at low levels isoform I, is expressed throughout the ectoderm. Isoform K is expressed in both mesoderm and ectoderm. Expression becomes restricted during later stages; starting from stage 14 to 15, isoform F is expressed in the gut. Isoform I is expressed in the CNS. Isoform I and isoform F show expression in the epithelium starting at stage 14, though for isoform I the CNS expression remains predominant. Expression is also seen in specific types of cells in the embryo; isoform K is expressed in the ventral furrow at stage 5 and in a dynamic pattern in the ventral neurogenic region starting at stage 7. Isoform T is expressed around the tracheal pits at stage 11. Isoform F shows transient enrichment in a dorsal cell layer in the CNS at stages 13 and 14.

The protein localises to the nucleus. In terms of biological role, putative transcription factor required for axon growth and guidance in the central and peripheral nervous systems. Repels CNS axons away from the midline by promoting the expression of the midline repellent sli and its receptor robo. This is Longitudinals lacking protein, isoforms F/I/K/T from Drosophila melanogaster (Fruit fly).